Consider the following 297-residue polypeptide: Glycosylphosphatidylinositol anchor biosynthesis protein 11 (297 aa).

The span at 1 to 18 (MTSASPSPLRAANAASSA) shows a compositional bias: low complexity. The tract at residues 1-26 (MTSASPSPLRAANAASSAPVPPPAMK) is disordered. Helical transmembrane passes span 44–64 (SFVH…ALVA) and 76–96 (FLAL…GSVL). Residues 97 to 140 (PSPPASPVSDGDEKEKEKEKEKEKEKEKRKLPLRAGKLPRKKNQ) are disordered. Over residues 107–126 (GDEKEKEKEKEKEKEKEKRK) the composition is skewed to basic and acidic residues. The span at 127–140 (LPLRAGKLPRKKNQ) shows a compositional bias: basic residues. An N-linked (GlcNAc...) asparagine glycan is attached at Asn-139. Helical transmembrane passes span 157 to 177 (LILT…LFGA), 187 to 207 (VLCA…VHGV), 225 to 245 (VWGG…PIPL), and 253 to 273 (AFPI…SVVC).

It belongs to the PIGF family.

The protein localises to the endoplasmic reticulum membrane. Its pathway is glycolipid biosynthesis; glycosylphosphatidylinositol-anchor biosynthesis. Its function is as follows. Acts in the GPI biosynthetic pathway between GlcNAc-PI synthesis and GPI transfer to protein. This is Glycosylphosphatidylinositol anchor biosynthesis protein 11 (gpi11) from Aspergillus fumigatus (strain ATCC MYA-4609 / CBS 101355 / FGSC A1100 / Af293) (Neosartorya fumigata).